Consider the following 473-residue polypeptide: Lactate utilization protein B (473 aa).

4Fe-4S ferredoxin-type domains lie at 302 to 332 and 351 to 380; these read GSEF…GHSY and YDDY…LHDL. The [4Fe-4S] cluster site is built by cysteine 311, cysteine 314, cysteine 317, cysteine 321, cysteine 364, cysteine 367, and cysteine 371.

Belongs to the LutB/YkgF family.

In terms of biological role, is involved in L-lactate degradation and allows cells to grow with lactate as the sole carbon source. Has probably a role as an electron transporter during oxidation of L-lactate. The chain is Lactate utilization protein B from Bacillus cytotoxicus (strain DSM 22905 / CIP 110041 / 391-98 / NVH 391-98).